We begin with the raw amino-acid sequence, 326 residues long: MAFNPFPPRQPVASARLPLTLISLDDWALATISGADSEKYLQGQVTADVAQLGEHQHLLVAHCDPKGKMWSNLRLFRRQDGFACIERRSLRDAQLTELKKYAVFSKVTIVADDENVLLGVAGFQARAALKNLFSELPDADKPLINDGVTSLLWFEHPDERFLLVTDVATADRVTEALRGEAQFNNSQQWLALNIEAGLPIIDAVNSAQFIPQATNIQALGGISFKKGCYTGQEMVARAKFRGANKRALWYLAGNASRVPEAGEDLELKMGENWRRTGTVLAAVQLDDGRVLVQVVMNNDMEADSVFRVRDDANTLSIQPLPYSLEE.

Trp-27 and Trp-189 together coordinate folate.

This sequence belongs to the tRNA-modifying YgfZ family.

It is found in the cytoplasm. Its function is as follows. Folate-binding protein involved in regulating the level of ATP-DnaA and in the modification of some tRNAs. It is probably a key factor in regulatory networks that act via tRNA modification, such as initiation of chromosomal replication. This chain is tRNA-modifying protein YgfZ, found in Enterobacter sp. (strain 638).